Here is a 169-residue protein sequence, read N- to C-terminus: HTH-type transcriptional regulator PchR (169 aa).

Positions 10-153 constitute an HTH marR-type domain; it reads YDIYVRLLHL…VLKFLEQLTS (144 aa). A DNA-binding region (H-T-H motif) is located at residues 64–87; that stretch reads NAGIARKMNLSKANVTKISTKLIK.

As to quaternary structure, homodimer.

Its function is as follows. Represses the expression of the yvmC-cypX operon, which is involved in pulcherriminic acid biosynthesis. Also negatively regulates yvmA, yvnB and its own expression. Positively regulates yisI expression. Acts by binding specifically to a 14-bp palindromic motif, the YvmB box, which is present in the promoter region of the target genes. The chain is HTH-type transcriptional regulator PchR from Bacillus subtilis (strain 168).